Consider the following 577-residue polypeptide: Arginine--tRNA ligase (577 aa).

The short motif at 122–132 is the 'HIGH' region element; the sequence is PNVAKEMHVGH.

It belongs to the class-I aminoacyl-tRNA synthetase family. As to quaternary structure, monomer.

The protein resides in the cytoplasm. The catalysed reaction is tRNA(Arg) + L-arginine + ATP = L-arginyl-tRNA(Arg) + AMP + diphosphate. The polypeptide is Arginine--tRNA ligase (Escherichia coli O9:H4 (strain HS)).